The sequence spans 37 residues: Somatostatin-37 (37 aa).

Residues 1 to 2 (AL) constitute a propeptide that is removed on maturation. A disulfide bridge connects residues Cys26 and Cys37.

The protein belongs to the somatostatin family.

It localises to the secreted. Functionally, somatostatin inhibits the release of somatotropin. In Petromyzon marinus (Sea lamprey), this protein is Somatostatin-37 (sst).